A 159-amino-acid chain; its full sequence is SsrA-binding protein (159 aa).

The disordered stretch occupies residues 133-159; that stretch reads KKLHDKRETSKERDWNRQKNRLLKERG. Residues 137–159 are compositionally biased toward basic and acidic residues; it reads DKRETSKERDWNRQKNRLLKERG.

This sequence belongs to the SmpB family.

It is found in the cytoplasm. Functionally, required for rescue of stalled ribosomes mediated by trans-translation. Binds to transfer-messenger RNA (tmRNA), required for stable association of tmRNA with ribosomes. tmRNA and SmpB together mimic tRNA shape, replacing the anticodon stem-loop with SmpB. tmRNA is encoded by the ssrA gene; the 2 termini fold to resemble tRNA(Ala) and it encodes a 'tag peptide', a short internal open reading frame. During trans-translation Ala-aminoacylated tmRNA acts like a tRNA, entering the A-site of stalled ribosomes, displacing the stalled mRNA. The ribosome then switches to translate the ORF on the tmRNA; the nascent peptide is terminated with the 'tag peptide' encoded by the tmRNA and targeted for degradation. The ribosome is freed to recommence translation, which seems to be the essential function of trans-translation. The polypeptide is SsrA-binding protein (Sinorhizobium medicae (strain WSM419) (Ensifer medicae)).